A 155-amino-acid polypeptide reads, in one-letter code: Regulatory protein RecX (155 aa).

Belongs to the RecX family.

The protein localises to the cytoplasm. In terms of biological role, modulates RecA activity. This chain is Regulatory protein RecX, found in Pseudomonas fluorescens (strain SBW25).